A 117-amino-acid polypeptide reads, in one-letter code: NADH-ubiquinone oxidoreductase chain 3 (117 aa).

3 consecutive transmembrane segments (helical) span residues leucine 8 to phenylalanine 28, leucine 61 to valine 81, and isoleucine 86 to isoleucine 106.

This sequence belongs to the complex I subunit 3 family.

It is found in the mitochondrion membrane. It carries out the reaction a ubiquinone + NADH + 5 H(+)(in) = a ubiquinol + NAD(+) + 4 H(+)(out). Functionally, core subunit of the mitochondrial membrane respiratory chain NADH dehydrogenase (Complex I) that is believed to belong to the minimal assembly required for catalysis. Complex I functions in the transfer of electrons from NADH to the respiratory chain. The immediate electron acceptor for the enzyme is believed to be ubiquinone. The protein is NADH-ubiquinone oxidoreductase chain 3 (ND3) of Tetraselmis subcordiformis (Marine green alga).